The following is a 507-amino-acid chain: GMP synthase [glutamine-hydrolyzing] 1 (507 aa).

The region spanning Lys-4–Asp-193 is the Glutamine amidotransferase type-1 domain. Cys-79 acts as the Nucleophile in catalysis. Active-site residues include His-167 and Glu-169. Residues Trp-194–Arg-382 form the GMPS ATP-PPase domain. Residue Ser-221–Ser-227 participates in ATP binding.

As to quaternary structure, homodimer.

The catalysed reaction is XMP + L-glutamine + ATP + H2O = GMP + L-glutamate + AMP + diphosphate + 2 H(+). It participates in purine metabolism; GMP biosynthesis; GMP from XMP (L-Gln route): step 1/1. In terms of biological role, catalyzes the synthesis of GMP from XMP. This is GMP synthase [glutamine-hydrolyzing] 1 (guaA1) from Bacteroides thetaiotaomicron (strain ATCC 29148 / DSM 2079 / JCM 5827 / CCUG 10774 / NCTC 10582 / VPI-5482 / E50).